The sequence spans 402 residues: Zinc finger protein 322 (402 aa).

Residues 43–65 (YQCLECKQNFCENLALIMCERTH) form a C2H2-type 1; atypical zinc finger. 8 consecutive C2H2-type zinc fingers follow at residues 71–93 (YKCDMCEKTFVQSSDLTSHQRIH), 99–121 (YKCSKCEKSFWHHLALSGHQRTH), 127–149 (YTCDICGKNFGQSSDLLVHQRSH), 155–177 (YLCSECDKCFSRSTNLIRHRRTH), 183–205 (FKCLECEKAFSGKSDLISHQRTH), 211–233 (YKCNKCEKSYRHRSAFIVHKRVH), 239–261 (YKCGACEKCFGQKSDLIVHQRVH), and 267–289 (YKCLECMRSFTRSANLIRHQATH). The C2H2-type 10; degenerate zinc finger occupies 293–315 (FKCLEYEKSFNCSSDLIVHQRIH). A C2H2-type 11; degenerate zinc finger spans residues 351–373 (YKYTVCDKSFHQSSALLQHQTVH). The residue at position 391 (S391) is a Phosphoserine.

This sequence belongs to the krueppel C2H2-type zinc-finger protein family. In terms of assembly, interacts with POU5F1. As to expression, ubiquitous. Highly expressed in heart and skeletal muscle.

The protein localises to the cytoplasm. The protein resides in the nucleus. In terms of biological role, transcriptional activator. Important for maintenance of pluripotency in embryonic stem cells. Binds directly to the POU5F1 distal enhancer and the NANOG proximal promoter, and enhances expression of both genes. Can also bind to numerous other gene promoters and regulates expression of many other pluripotency factors, either directly or indirectly. Promotes inhibition of MAPK signaling during embryonic stem cell differentiation. The protein is Zinc finger protein 322 (ZNF322) of Homo sapiens (Human).